The primary structure comprises 2671 residues: Stalled ribosome sensor GCN1 (2671 aa).

Alanine 2 bears the N-acetylalanine mark. HEAT repeat units follow at residues 140–178 (NKLV…ENPG), 257–293 (EFKD…LDLS), 294–331 (QYAM…QCSD), 385–423 (IVAE…EVPK), 425–459 (LTEW…GDTL), 460–503 (LQAL…SVAD), 560–597 (NKVQ…SLGG), 599–636 (KLAH…AGKA), 697–732 (DPEA…SLSV), and 733–770 (LSPD…QTPA). Phosphoserine is present on serine 729. At serine 786 the chain carries Phosphoserine. A coiled-coil region spans residues 804–863 (QIIELELKEEIKKKKGIKEEVQLTSKQKEMLQAQLDREAQVRRRLQELDGELEAALGLLD). HEAT repeat units lie at residues 879-925 (VLVD…HVTL), 979-1016 (SLVF…QAQL), 1035-1072 (LPRV…SSSG), 1078-1115 (FAEQ…VLPA), 1155-1192 (DLQP…RYQR), 1210-1250 (YRPP…YLDS), 1251-1289 (SQVK…THGK), 1290-1332 (ENVN…HLDK), 1335-1372 (PKVK…AIKE), 1374-1410 (AGGM…GLGI), 1413-1451 (LKQQ…MLGK), 1455-1492 (PYVV…NLSA), 1493-1530 (HGVK…CAPK), 1534-1571 (SCLP…VIRN), 1573-1609 (EILA…HFID), 1611-1648 (PSLA…LTDQ), 1653-1690 (PYLP…GMGE), 1692-1729 (CFED…GLGV), 1731-1769 (KLEK…TFGD), 1773-1810 (PYVG…MYAE), 1812-1848 (AIAL…HISG), 1921-1958 (EILP…KLGE), 1959-1996 (KILP…STSR), 2001-2038 (YFSE…TIGH), 2039-2076 (QALE…SRVV), 2078-2106 (PYLV…DALT), 2107-2146 (RHLG…VEDD), 2147-2184 (TGHR…RSKA), 2188-2225 (SHLR…KLDA), 2259-2296 (KGVT…LTSA), 2301-2338 (PSVV…AKVG), 2339-2380 (IALK…IHIK), 2382-2417 (DPLF…GAGA), 2422-2459 (VIRK…FLTE), 2546-2583 (QLPA…DPLP), and 2588-2625 (QAIK…MRQG). Residues 2260–2408 (GVTSILPVLR…GVRDTMLQAL (149 aa)) are RWDBD region. A Phosphoserine modification is found at serine 2276. An HEAT 47; degenerate repeat occupies 2627–2661 (EVFQSLSKILDVASLEVLNEVNRRSLKKLASQADS).

Belongs to the GCN1 family. Interacts with EIF2AK4/GCN2; this interaction stimulates the EIF2AK4/GCN2 kinase activity and is impaired by IMPACT upon a variety of stress conditions, such as amino acid depletion, UV-C irradiation, proteasome inhibitor treatment and glucose deprivation. Interacts with IMPACT; this prevents the interaction of GCN1 with EIF2AK4/GCN2 and inhibits EIF2AK4/GCN2 kinase activity. Interacts with RNF14; interaction takes place following ribosome stalling and promotes recruitment of RNF14. In terms of tissue distribution, ubiquitously expressed. Expressed in skeletal muscules, ovary and testis.

It localises to the cytoplasm. Its function is as follows. Ribosome collision sensor that plays a key role in the RNF14-RNF25 translation quality control pathway, a pathway that takes place when a ribosome has stalled during translation, and which promotes ubiquitination and degradation of translation factors on stalled ribosomes. Directly binds to the ribosome and acts as a sentinel for colliding ribosomes: activated following ribosome stalling and promotes recruitment of RNF14, which directly ubiquitinates EEF1A1/eEF1A, leading to its degradation. In addition to EEF1A1/eEF1A, the RNF14-RNF25 translation quality control pathway mediates degradation of ETF1/eRF1 and ubiquitination of ribosomal protein. GCN1 also acts as a positive activator of the integrated stress response (ISR) by mediating activation of EIF2AK4/GCN2 in response to amino acid starvation. Interaction with EIF2AK4/GCN2 on translating ribosomes stimulates EIF2AK4/GCN2 kinase activity, leading to phosphorylation of eukaryotic translation initiation factor 2 (eIF-2-alpha/EIF2S1). EIF2S1/eIF-2-alpha phosphorylation converts EIF2S1/eIF-2-alpha into a global protein synthesis inhibitor, leading to a global attenuation of cap-dependent translation, and thus to a reduced overall utilization of amino acids, while concomitantly initiating the preferential translation of ISR-specific mRNAs, such as the transcriptional activator ATF4, and hence allowing ATF4-mediated reprogramming of amino acid biosynthetic gene expression to alleviate nutrient depletion. The protein is Stalled ribosome sensor GCN1 of Homo sapiens (Human).